An 87-amino-acid chain; its full sequence is Small ribosomal subunit protein bS20 (87 aa).

A compositionally biased stretch (basic residues) spans 1–22 (MANIKSAKKRAVQSEKRRKHNA). Residues 1-27 (MANIKSAKKRAVQSEKRRKHNASSRSM) are disordered.

This sequence belongs to the bacterial ribosomal protein bS20 family.

Its function is as follows. Binds directly to 16S ribosomal RNA. The sequence is that of Small ribosomal subunit protein bS20 from Pectobacterium atrosepticum (strain SCRI 1043 / ATCC BAA-672) (Erwinia carotovora subsp. atroseptica).